The sequence spans 184 residues: Calmodulin-related protein (184 aa).

4 consecutive EF-hand domains span residues Asp8 to Asn43, Pro44 to Asp79, Asp81 to Lys116, and Leu117 to Arg152. 14 residues coordinate Ca(2+): Asp21, Asp23, Asp25, Cys27, Glu32, Asp57, Asp59, Asn61, Thr63, Glu68, Asp94, Asp96, Asn98, and Glu105. Lys116 is subject to N6,N6,N6-trimethyllysine. Asp130, Asp132, Asp134, Gln136, and Glu141 together coordinate Ca(2+). Residues Glu156–Leu184 form a disordered region. Low complexity predominate over residues Ser161–Asn170. A compositionally biased stretch (basic residues) spans Asn171 to Leu184.

The protein belongs to the calmodulin family.

Its function is as follows. Calmodulin mediates the control of a large number of enzymes, ion channels and other proteins by Ca(2+). Among the enzymes to be stimulated by the calmodulin-Ca(2+) complex are a number of protein kinases and phosphatases. This is Calmodulin-related protein (CAM53) from Petunia hybrida (Petunia).